The sequence spans 207 residues: Small ribosomal subunit protein bS6c (207 aa).

The transit peptide at 1-59 directs the protein to the chloroplast; sequence MASSLCVSNSTICPLPNVSSQPLLSFSHSLRPFISKSKPMCASIQKRDGSQFVVKSQAL. The segment at 69–99 is disordered; that stretch reads GFGSDDDPTSPSGSGVSTALEDKPEPQCPPG. Residues 77–86 are compositionally biased toward low complexity; sequence TSPSGSGVST.

Belongs to the bacterial ribosomal protein bS6 family. In terms of assembly, part of the 30S ribosomal subunit.

It is found in the plastid. It localises to the chloroplast. Its function is as follows. Binds together with bS18 to 16S ribosomal RNA. The protein is Small ribosomal subunit protein bS6c (RPS6) of Arabidopsis thaliana (Mouse-ear cress).